Here is a 235-residue protein sequence, read N- to C-terminus: MRKIAIIGAMAEEVERLASHLENRQTRQHAGSTFHSGHLHGVEVVILQSGIGKVNAAVGTTQLLEAYQPDAVINTGSAGGFGVDLDVGDVVISSEVRHHDVDAVVFGYEYGQVPQMPAAYAPDPHLVNVARECIEGLGELRVAEGLICTGDIFMADKAAVDQARERFPSMLAAEMEAAAIAQTCHLYGCPFVVIRALSDIAGKESDLSFQAFIEKAATHSAMMVEAMVKRLGTAS.

Catalysis depends on Glu13, which acts as the Proton acceptor. Substrate-binding positions include Gly79, Met154, and 175 to 176; that span reads ME. Residue Asp199 is the Proton donor of the active site.

The protein belongs to the PNP/UDP phosphorylase family. MtnN subfamily.

It carries out the reaction S-adenosyl-L-homocysteine + H2O = S-(5-deoxy-D-ribos-5-yl)-L-homocysteine + adenine. The enzyme catalyses S-methyl-5'-thioadenosine + H2O = 5-(methylsulfanyl)-D-ribose + adenine. It catalyses the reaction 5'-deoxyadenosine + H2O = 5-deoxy-D-ribose + adenine. Its pathway is amino-acid biosynthesis; L-methionine biosynthesis via salvage pathway; S-methyl-5-thio-alpha-D-ribose 1-phosphate from S-methyl-5'-thioadenosine (hydrolase route): step 1/2. Catalyzes the irreversible cleavage of the glycosidic bond in both 5'-methylthioadenosine (MTA) and S-adenosylhomocysteine (SAH/AdoHcy) to adenine and the corresponding thioribose, 5'-methylthioribose and S-ribosylhomocysteine, respectively. Also cleaves 5'-deoxyadenosine, a toxic by-product of radical S-adenosylmethionine (SAM) enzymes, into 5-deoxyribose and adenine. The sequence is that of 5'-methylthioadenosine/S-adenosylhomocysteine nucleosidase from Chromohalobacter salexigens (strain ATCC BAA-138 / DSM 3043 / CIP 106854 / NCIMB 13768 / 1H11).